The primary structure comprises 235 residues: Zorya protein ZorB (235 aa).

Residues 25–44 (LMAGLMMVFMFISIAYMHYV) traverse the membrane as a helical segment. The 139-residue stretch at 87–225 (QTLEVRFKSP…RVTFKVVTNA (139 aa)) folds into the OmpA-like domain.

The protein belongs to the MotB family.

It localises to the cell inner membrane. Its function is as follows. Component of antiviral defense system Zorya type II, composed of ZorA, ZorB and ZorE. Expression of Zorya type II in E.coli (strain MG1655) confers resistance to phages SECphi7 and T7. While most T7 infected Zorya-containing cells undergo abortive infection, a minority produce viable phage progeny. These eventually accumulate to a high multiplicity of infection, leading to culture collapse by 170 minutes after initial infection. ZorA and ZorB probably assemble in the cell inner membrane and exert their effect there. This Escherichia coli (strain ATCC 8739 / DSM 1576 / NBRC 3972 / NCIMB 8545 / WDCM 00012 / Crooks) protein is Zorya protein ZorB.